The following is a 425-amino-acid chain: Elongation factor 1-alpha (425 aa).

The 217-residue stretch at 5–221 (KPHINLAVIG…DELEVPDKPT (217 aa)) folds into the tr-type G domain. The G1 stretch occupies residues 14–21 (GHIDHGKS). Residue 14 to 21 (GHIDHGKS) participates in GTP binding. S21 contributes to the Mg(2+) binding site. The interval 70 to 74 (GITID) is G2. Positions 91–94 (DCPG) are G3. GTP contacts are provided by residues 91 to 95 (DCPGH) and 146 to 149 (NKMD). A G4 region spans residues 146–149 (NKMD). Residues 185-187 (SAF) form a G5 region.

Belongs to the TRAFAC class translation factor GTPase superfamily. Classic translation factor GTPase family. EF-Tu/EF-1A subfamily.

It localises to the cytoplasm. It carries out the reaction GTP + H2O = GDP + phosphate + H(+). Its function is as follows. GTP hydrolase that promotes the GTP-dependent binding of aminoacyl-tRNA to the A-site of ribosomes during protein biosynthesis. This Methanospirillum hungatei JF-1 (strain ATCC 27890 / DSM 864 / NBRC 100397 / JF-1) protein is Elongation factor 1-alpha.